The primary structure comprises 408 residues: Dual-specificity RNA methyltransferase RlmN (408 aa).

Glu-122 acts as the Proton acceptor in catalysis. A Radical SAM core domain is found at 128–369 (EEDRGTLCIS…NRAGYASPIR (242 aa)). Cys-135 and Cys-380 form a disulfide bridge. Residues Cys-142, Cys-146, and Cys-149 each contribute to the [4Fe-4S] cluster site. S-adenosyl-L-methionine-binding positions include 206–207 (GE), Ser-238, 260–262 (SLH), and Asn-337. Cys-380 (S-methylcysteine intermediate) is an active-site residue.

This sequence belongs to the radical SAM superfamily. RlmN family. It depends on [4Fe-4S] cluster as a cofactor.

It localises to the cytoplasm. It carries out the reaction adenosine(2503) in 23S rRNA + 2 reduced [2Fe-2S]-[ferredoxin] + 2 S-adenosyl-L-methionine = 2-methyladenosine(2503) in 23S rRNA + 5'-deoxyadenosine + L-methionine + 2 oxidized [2Fe-2S]-[ferredoxin] + S-adenosyl-L-homocysteine. The enzyme catalyses adenosine(37) in tRNA + 2 reduced [2Fe-2S]-[ferredoxin] + 2 S-adenosyl-L-methionine = 2-methyladenosine(37) in tRNA + 5'-deoxyadenosine + L-methionine + 2 oxidized [2Fe-2S]-[ferredoxin] + S-adenosyl-L-homocysteine. In terms of biological role, specifically methylates position 2 of adenine 2503 in 23S rRNA and position 2 of adenine 37 in tRNAs. m2A2503 modification seems to play a crucial role in the proofreading step occurring at the peptidyl transferase center and thus would serve to optimize ribosomal fidelity. This is Dual-specificity RNA methyltransferase RlmN from Chelativorans sp. (strain BNC1).